Reading from the N-terminus, the 900-residue chain is Iodate reductase subunit IdrA (900 aa).

Positions 1–21 are disordered; it reads MSENIKQGGAGTFMQAPQDSV. The [3Fe-4S] cluster site is built by Cys-35, Cys-38, and Cys-42.

This sequence belongs to the prokaryotic molybdopterin-containing oxidoreductase family. The iodate reductase (Idr) complex is composed of a molybdopterin-dependent iodate reductase (IdrA and IdrB subunits) and two associated peroxidases (IdrP1 and IdrP2). [3Fe-4S] cluster serves as cofactor. The cofactor is Mo-bis(molybdopterin guanine dinucleotide).

The protein resides in the periplasm. In terms of biological role, involved in iodate respiration. May accept electrons from cytochrome c551, and catalyze the reduction of iodate (IO(3)(-)) to produce the chemically unstable intermediate hypoiodous acid (HIO). This intermediate then undergoes abiotic disproportionation to yield two molecules of iodide (I(-)) and one molecule of iodate. The resultant iodate subsequently cycles back into the reductive pathway. The initial reduction of iodate may inadvertently produce low levels of incidental toxic H(2)O(2), which is detoxified by IdrP1 and IdrP2. This is Iodate reductase subunit IdrA from Denitromonas iodatirespirans.